A 278-amino-acid polypeptide reads, in one-letter code: Phosphatidylglycerol--prolipoprotein diacylglyceryl transferase (278 aa).

4 helical membrane passes run 19 to 39 (WYGILMATGVLVATLMAINEG), 49 to 69 (FIDFLLWAVPIGFIGARIYYV), 83 to 103 (IIAIWNGGIAIYGGLIAGLIV), and 112 to 132 (MLPPFLMLDIIAPGVMAAQVI). Position 134 (Arg134) interacts with a 1,2-diacyl-sn-glycero-3-phospho-(1'-sn-glycerol). 3 helical membrane passes run 174-194 (QPTYLYESALNLVGLILILSL), 204-224 (GEVFFSYVIWYAAVRFFVEGM), and 235-255 (IRVSQALSLILFFGAIILWVY).

It belongs to the Lgt family.

It localises to the cell membrane. It catalyses the reaction L-cysteinyl-[prolipoprotein] + a 1,2-diacyl-sn-glycero-3-phospho-(1'-sn-glycerol) = an S-1,2-diacyl-sn-glyceryl-L-cysteinyl-[prolipoprotein] + sn-glycerol 1-phosphate + H(+). The protein operates within protein modification; lipoprotein biosynthesis (diacylglyceryl transfer). In terms of biological role, catalyzes the transfer of the diacylglyceryl group from phosphatidylglycerol to the sulfhydryl group of the N-terminal cysteine of a prolipoprotein, the first step in the formation of mature lipoproteins. The protein is Phosphatidylglycerol--prolipoprotein diacylglyceryl transferase of Lactobacillus gasseri (strain ATCC 33323 / DSM 20243 / BCRC 14619 / CIP 102991 / JCM 1131 / KCTC 3163 / NCIMB 11718 / NCTC 13722 / AM63).